We begin with the raw amino-acid sequence, 394 residues long: Glycerol-1-phosphate dehydrogenase [NAD(P)+] (394 aa).

NAD(+)-binding positions include aspartate 54, 116 to 120 (GTIHD), and 138 to 141 (TAPS). Aspartate 143 contributes to the substrate binding site. Serine 147 serves as a coordination point for NAD(+). Aspartate 190 lines the substrate pocket. Ni(2+) is bound by residues aspartate 190 and histidine 270. Histidine 274 lines the substrate pocket. A Ni(2+)-binding site is contributed by histidine 290.

Belongs to the glycerol-1-phosphate dehydrogenase family. As to quaternary structure, homodimer. It depends on Ni(2+) as a cofactor.

The protein resides in the cytoplasm. It carries out the reaction sn-glycerol 1-phosphate + NAD(+) = dihydroxyacetone phosphate + NADH + H(+). The catalysed reaction is sn-glycerol 1-phosphate + NADP(+) = dihydroxyacetone phosphate + NADPH + H(+). Its function is as follows. Catalyzes the NAD(P)H-dependent reduction of dihydroxyacetonephosphate (DHAP or glycerone phosphate) to glycerol 1-phosphate (G1P). The G1P thus generated is probably used for the synthesis of phosphoglycerolipids in Gram-positive bacterial species. This Bacillus velezensis (strain DSM 23117 / BGSC 10A6 / LMG 26770 / FZB42) (Bacillus amyloliquefaciens subsp. plantarum) protein is Glycerol-1-phosphate dehydrogenase [NAD(P)+].